A 250-amino-acid polypeptide reads, in one-letter code: Triosephosphate isomerase (250 aa).

A substrate-binding site is contributed by 9 to 11 (NWK). His94 functions as the Electrophile in the catalytic mechanism. The active-site Proton acceptor is the Glu166. Substrate is bound by residues Gly172, Ser212, and 233–234 (GG).

It belongs to the triosephosphate isomerase family. Homodimer.

It is found in the cytoplasm. The catalysed reaction is D-glyceraldehyde 3-phosphate = dihydroxyacetone phosphate. It functions in the pathway carbohydrate biosynthesis; gluconeogenesis. The protein operates within carbohydrate degradation; glycolysis; D-glyceraldehyde 3-phosphate from glycerone phosphate: step 1/1. Functionally, involved in the gluconeogenesis. Catalyzes stereospecifically the conversion of dihydroxyacetone phosphate (DHAP) to D-glyceraldehyde-3-phosphate (G3P). The sequence is that of Triosephosphate isomerase from Treponema denticola (strain ATCC 35405 / DSM 14222 / CIP 103919 / JCM 8153 / KCTC 15104).